We begin with the raw amino-acid sequence, 182 residues long: Peptidyl-prolyl cis-trans isomerase ssp-1 (182 aa).

One can recognise a WW domain in the interval 7 to 41; the sequence is TGLPEDWEVRHSQSKNLPYYFNSATKTSRWEPPSG. The PpiC domain occupies 71–182; that stretch reads QGKIRCAHLL…SGLHLIERLE (112 aa).

The enzyme catalyses [protein]-peptidylproline (omega=180) = [protein]-peptidylproline (omega=0). In terms of biological role, site-specific PPIase with respect to the amino acid N-terminal to the proline residue. Peptides with glutamate, phosphoserine, or phosphothreonine in the -1 position are the best substrates. It is not only able to isomerize small peptides but is also active in protein folding. This is Peptidyl-prolyl cis-trans isomerase ssp-1 (ssp-1) from Neurospora crassa (strain ATCC 24698 / 74-OR23-1A / CBS 708.71 / DSM 1257 / FGSC 987).